The sequence spans 228 residues: Ribose-5-phosphate isomerase A (228 aa).

Substrate is bound by residues 28 to 31 (TGST), 84 to 87 (DGAD), and 97 to 100 (KGGG). Catalysis depends on Glu106, which acts as the Proton acceptor. A substrate-binding site is contributed by Lys124.

It belongs to the ribose 5-phosphate isomerase family. In terms of assembly, homodimer.

The catalysed reaction is aldehydo-D-ribose 5-phosphate = D-ribulose 5-phosphate. It functions in the pathway carbohydrate degradation; pentose phosphate pathway; D-ribose 5-phosphate from D-ribulose 5-phosphate (non-oxidative stage): step 1/1. Catalyzes the reversible conversion of ribose-5-phosphate to ribulose 5-phosphate. The chain is Ribose-5-phosphate isomerase A from Levilactobacillus brevis (strain ATCC 367 / BCRC 12310 / CIP 105137 / JCM 1170 / LMG 11437 / NCIMB 947 / NCTC 947) (Lactobacillus brevis).